A 499-amino-acid polypeptide reads, in one-letter code: Cytochrome P450 77A1 (499 aa).

Heme is bound at residue Cys-443.

The protein belongs to the cytochrome P450 family. It depends on heme as a cofactor.

This Solanum melongena (Eggplant) protein is Cytochrome P450 77A1 (CYP77A1).